The sequence spans 72 residues: MARDDVIEVDGKVIEALPNATFKVELDNKHVVLCRISGKMRMHYIRIALGDRVKLELTPYSLDKGRITFRYK.

An S1-like domain is found at 1–72 (MARDDVIEVD…DKGRITFRYK (72 aa)).

This sequence belongs to the IF-1 family. Component of the 30S ribosomal translation pre-initiation complex which assembles on the 30S ribosome in the order IF-2 and IF-3, IF-1 and N-formylmethionyl-tRNA(fMet); mRNA recruitment can occur at any time during PIC assembly.

It is found in the cytoplasm. Functionally, one of the essential components for the initiation of protein synthesis. Stabilizes the binding of IF-2 and IF-3 on the 30S subunit to which N-formylmethionyl-tRNA(fMet) subsequently binds. Helps modulate mRNA selection, yielding the 30S pre-initiation complex (PIC). Upon addition of the 50S ribosomal subunit IF-1, IF-2 and IF-3 are released leaving the mature 70S translation initiation complex. In Helicobacter pylori (strain HPAG1), this protein is Translation initiation factor IF-1.